We begin with the raw amino-acid sequence, 130 residues long: Cholecystokinin (130 aa).

The N-terminal stretch at 1-20 (MYSGICIYMFLAMLSTSSSG) is a signal peptide. A propeptide spanning residues 21-60 (QQATGSHNENPVATELEQSLTEHHRHVRVPSSAGQLKPIQ) is cleaved from the precursor. Position 112 is a sulfotyrosine (Tyr112). A Phenylalanine amide modification is found at Phe118. A propeptide spanning residues 122–130 (SAEEYEYSS) is cleaved from the precursor. A sulfotyrosine mark is found at Tyr126 and Tyr128.

This sequence belongs to the gastrin/cholecystokinin family. Post-translationally, the precursor is cleaved by proteases to produce a number of active cholecystokinins. Expressed in brain, duodenum and small intestine.

Its subcellular location is the secreted. In terms of biological role, this peptide hormone induces gall bladder contraction and the release of pancreatic enzymes in the gut. Its function in the brain is not clear. The sequence is that of Cholecystokinin from Trachemys scripta (Red-eared slider turtle).